The primary structure comprises 576 residues: MDSRRRPSKPLLTSSGEVLHRKQASPVTDEDQIHRSPKASDALPLPLYLTNAVFFTLFFSVAYYLLHRWRDKIRNSTPLHVVTLSEIAAIVSLIASFIYLLGFFGIDFVQSFIARASHEAWDLDDATPDFLVDDSGCPPPCPIVRTPNLDRQVLATLSSEEDEEIINSVVQGKVPSYSLESKIGDCKRAAAIRREALQRTTRRSLQGLPLEGFDYESILGQCCEMPVGYVQIPVGIAGPLMLDGFEYSVPMATTEGCLIASTNRGCKAIHLSGGASSVLLRDGMTRAPVVRFSSAKRASELKFFLEDPENFDTLSMVFNRSSRFARLQGIQCAIAGKNVYVRFTCSTGDAMGMNMVSKGVQNVLDFLQTDFHDMDVIGISGNFCSDKKPAAVNWIEGRGKSVVCEAVINEEVVKKVLKTNIDALVELNMLKNLAGSAIAGALGGFNAHASNIVSAIFIATGQDPAQNIESSHCITMMEAINNGKDLHVSVTMPSIEVGTVGGGTQLASQSACLNLLGVKGSNKDSPGANSRLLATIVAGSVLAGELSLMSAIAAGQLVKSHMKYNRSSKDMSKVAC.

A disordered region spans residues Met1–Arg35. Helical transmembrane passes span Ala42 to Ala62 and Ala89 to Val109. The active-site Charge relay system is the Glu255. An N-linked (GlcNAc...) asparagine glycan is attached at Asn319. Residues Lys387 and Asp463 each act as charge relay system in the active site. A helical transmembrane segment spans residues Leu532–Ile552. Residue His561 is the Proton donor of the active site. N-linked (GlcNAc...) asparagine glycosylation occurs at Asn565.

The protein belongs to the HMG-CoA reductase family. As to expression, expressed in trichomes, leaves, flowers, roots and stems.

The protein localises to the endoplasmic reticulum membrane. The protein resides in the plastid. It is found in the chloroplast membrane. It localises to the peroxisome membrane. It catalyses the reaction (R)-mevalonate + 2 NADP(+) + CoA = (3S)-3-hydroxy-3-methylglutaryl-CoA + 2 NADPH + 2 H(+). It functions in the pathway metabolic intermediate biosynthesis; (R)-mevalonate biosynthesis; (R)-mevalonate from acetyl-CoA: step 3/3. In terms of biological role, catalyzes the synthesis of mevalonate, the specific precursor of all isoprenoid compounds present in plants. Component of the triterpene saponins (e.g. ginsenosides or panaxosides) and phytosterols biosynthetic pathways. Promotes triterpenes accumulation in roots. The chain is 3-hydroxy-3-methylglutaryl coenzyme A reductase 1 from Cannabis sativa (Hemp).